Consider the following 302-residue polypeptide: uncharacterized protein (302 aa).

The signal sequence occupies residues 1–52 (MLKKLKVVRLLVNHLIYCPSIFMPYSKNMKKKIWNKTSLGALFMLFGTALTA).

It belongs to the MG439/MG440 family.

This is an uncharacterized protein from Mycoplasma pneumoniae (strain ATCC 29342 / M129 / Subtype 1) (Mycoplasmoides pneumoniae).